Consider the following 323-residue polypeptide: Methionyl-tRNA formyltransferase (323 aa).

115-118 (SLLP) is a binding site for (6S)-5,6,7,8-tetrahydrofolate.

This sequence belongs to the Fmt family.

The enzyme catalyses L-methionyl-tRNA(fMet) + (6R)-10-formyltetrahydrofolate = N-formyl-L-methionyl-tRNA(fMet) + (6S)-5,6,7,8-tetrahydrofolate + H(+). Its function is as follows. Attaches a formyl group to the free amino group of methionyl-tRNA(fMet). The formyl group appears to play a dual role in the initiator identity of N-formylmethionyl-tRNA by promoting its recognition by IF2 and preventing the misappropriation of this tRNA by the elongation apparatus. The sequence is that of Methionyl-tRNA formyltransferase from Blochmanniella floridana.